Consider the following 399-residue polypeptide: MEKHLIALSVAALLAGAAPASADIKMGSLYPFSGPLALLGDESARGLEIAVEEINAKGGVQGEKIVLVRGDAVDNNQAIGEARRLISVENVAGIFGSFSSGRAVAASQVSELAGLPYFELGAVADEITDRGLENVYRANPYARDFAQMIVEMLQKKIAPKLGRDSKDLKIAVIYEDSSYGTSVAKHEETFLKEAGLNMVLSQSYPGNTVDMSSLVLDLKSAGADVVLQTSYQSDSVLFLQQANEGGYKPSAIVGAGGGYSLQPTADAVGHDVIEAAYDVDFTQFAVNTSFTPGLEEFVEAYKKKYGETPRSGHSLTNYVGAKVILEALNKVKGFDAAAVKQALSAVDIEAGKNAMGYGFKFDQNNQNERASMMGMQWQDGKLVTVYPDAAAISEIRLPQ.

The N-terminal stretch at 1 to 22 (MEKHLIALSVAALLAGAAPASA) is a signal peptide.

The protein belongs to the leucine-binding protein family.

Its function is as follows. Component of an amino-acid transport system. This is Leu/Ile/Val-binding protein homolog 7 from Brucella melitensis biotype 1 (strain ATCC 23456 / CCUG 17765 / NCTC 10094 / 16M).